Consider the following 516-residue polypeptide: D-aminopeptidase (516 aa).

Ser-61 serves as the catalytic Nucleophile. Catalysis depends on Lys-64, which acts as the Proton donor/acceptor. An important for specificity region spans residues Arg-476–Asp-486. Asp-480 is a substrate binding site.

This sequence belongs to the peptidase S12 family. As to quaternary structure, homodimer.

It catalyses the reaction Release of an N-terminal D-amino acid from a peptide, Xaa-|-Yaa-, in which Xaa is preferably D-Ala, D-Ser or D-Thr. D-amino acid amides and methyl esters also are hydrolyzed, as is glycine amide.. With respect to regulation, inhibited by beta-lactam compounds such as 6-aminopenicillic acid, 7-aminocephalosporanic acid, benzylpenicillin and ampicillin. Inhibited by p-chloromercuribenzoate. Hydrolyzes N-terminal residues in D-amino acid-containing peptides. This Cereibacter sphaeroides (strain ATCC 17023 / DSM 158 / JCM 6121 / CCUG 31486 / LMG 2827 / NBRC 12203 / NCIMB 8253 / ATH 2.4.1.) (Rhodobacter sphaeroides) protein is D-aminopeptidase.